We begin with the raw amino-acid sequence, 199 residues long: uncharacterized protein (199 aa).

Transmembrane regions (helical) follow at residues 22 to 44 (VVVV…YLFL), 65 to 87 (TGFI…HLAL), and 91 to 108 (HTIT…FFFW).

It belongs to the ycf1 family.

The protein localises to the mitochondrion membrane. This is an uncharacterized protein from Arabidopsis thaliana (Mouse-ear cress).